The following is a 60-amino-acid chain: Ribosome biogenesis protein Nop10 (60 aa).

Residues 37-60 (APAPFDPADPHGKYRRALKERRRL) form a disordered region. Residues 49–60 (KYRRALKERRRL) show a composition bias toward basic residues.

It belongs to the NOP10 family.

Functionally, involved in ribosome biogenesis; more specifically in 18S rRNA pseudouridylation and in cleavage of pre-rRNA. This chain is Ribosome biogenesis protein Nop10, found in Halobacterium salinarum (strain ATCC 29341 / DSM 671 / R1).